The sequence spans 301 residues: Ubiquinone biosynthesis protein COQ4, mitochondrial (301 aa).

The transit peptide at 1–46 (MEVTLKRSAALARQTTPLLRPLRPVATYPSNNNNNNNPTPQQRRPY) directs the protein to the mitochondrion. Residues 14-48 (QTTPLLRPLRPVATYPSNNNNNNNPTPQQRRPYSL) are disordered. Residues 38–48 (PTPQQRRPYSL) show a composition bias toward polar residues. The Zn(2+) site is built by histidine 185, aspartate 186, histidine 189, and glutamate 201.

The protein belongs to the COQ4 family. As to quaternary structure, component of a multi-subunit COQ enzyme complex, composed of at least COQ3, COQ4, COQ5, COQ6, COQ7 and COQ9. It depends on Zn(2+) as a cofactor.

It is found in the mitochondrion inner membrane. The catalysed reaction is a 4-hydroxy-3-methoxy-5-(all-trans-polyprenyl)benzoate + H(+) = a 2-methoxy-6-(all-trans-polyprenyl)phenol + CO2. Its pathway is cofactor biosynthesis; ubiquinone biosynthesis. Lyase that catalyzes the C1-decarboxylation of 4-hydroxy-3-methoxy-5-(all-trans-polyprenyl)benzoic acid into 2-methoxy-6-(all-trans-polyprenyl)phenol during ubiquinone biosynthesis. This is Ubiquinone biosynthesis protein COQ4, mitochondrial from Podospora anserina (strain S / ATCC MYA-4624 / DSM 980 / FGSC 10383) (Pleurage anserina).